A 249-amino-acid polypeptide reads, in one-letter code: Tetraspanin-7 (249 aa).

Over 1 to 16 (MASRRMETKPVITCLK) the chain is Cytoplasmic. The helical transmembrane segment at 17 to 40 (TLLIIYSFVFWITGVILLAVGVWG) threads the bilayer. Over 41-56 (KLTLGTYISLIAENST) the chain is Extracellular. Asn54 carries an N-linked (GlcNAc...) asparagine glycan. A helical membrane pass occupies residues 57–75 (NAPYVLIGTGTTIVVFGLF). Residues 76–86 (GCFATCRGSPW) are Cytoplasmic-facing. A helical membrane pass occupies residues 87–112 (MLKLYAMFLSLVFLAELVAGISGFVF). Over 113–213 (RHEIKDTFLR…LVTSFMETNM (101 aa)) the chain is Extracellular. 4 N-linked (GlcNAc...) asparagine glycosylation sites follow: Asn155, Asn158, Asn177, and Asn188. The helical transmembrane segment at 214–234 (GIIAGVAFGIAFSQLIGMLLA) threads the bilayer. Topologically, residues 235-249 (CCLSRFITANQYEMV) are cytoplasmic.

Belongs to the tetraspanin (TM4SF) family.

It localises to the membrane. May be involved in cell proliferation and cell motility. This is Tetraspanin-7 (Tspan7) from Mus musculus (Mouse).